The following is a 102-amino-acid chain: MDSQNIRIRLKAYDHRVLDNSTREIVNTAKRTGAQVRGPIPLPTHIERFTVNRSPHVDKKSREQFEIRTHRRLLDIVEPTPQTVDALMKLDLAAGVDVEIKI.

This sequence belongs to the universal ribosomal protein uS10 family. Part of the 30S ribosomal subunit.

Functionally, involved in the binding of tRNA to the ribosomes. In Acidiphilium cryptum (strain JF-5), this protein is Small ribosomal subunit protein uS10.